The following is a 396-amino-acid chain: Elongation factor Tu (396 aa).

The 197-residue stretch at 10 to 206 folds into the tr-type G domain; sequence KPHVNVGTIG…ALDTYIPTPE (197 aa). Residues 19–26 form a G1 region; the sequence is GHVDHGKT. GTP is bound at residue 19–26; it reads GHVDHGKT. Position 26 (Thr26) interacts with Mg(2+). Residues 60-64 are G2; it reads GITIN. Residues 81–84 form a G3 region; the sequence is DCPG. Residues 81 to 85 and 136 to 139 contribute to the GTP site; these read DCPGH and NKCD. A G4 region spans residues 136-139; that stretch reads NKCD. A G5 region spans residues 174-176; that stretch reads SAK.

It belongs to the TRAFAC class translation factor GTPase superfamily. Classic translation factor GTPase family. EF-Tu/EF-1A subfamily. As to quaternary structure, monomer.

The protein localises to the cytoplasm. The enzyme catalyses GTP + H2O = GDP + phosphate + H(+). In terms of biological role, GTP hydrolase that promotes the GTP-dependent binding of aminoacyl-tRNA to the A-site of ribosomes during protein biosynthesis. The protein is Elongation factor Tu of Burkholderia vietnamiensis (strain G4 / LMG 22486) (Burkholderia cepacia (strain R1808)).